A 457-amino-acid polypeptide reads, in one-letter code: ADP-dependent glucose/glucosamine kinase (457 aa).

The region spanning 5-457 (TNWESLYEKA…SAFVSEFSLH (453 aa)) is the ADPK domain. D-glucose contacts are provided by residues Asp-37, Glu-91, 115–116 (GQ), and His-179. Glu-269 provides a ligand contact to Mg(2+). Asn-295 provides a ligand contact to ADP. Glu-298 is a binding site for Mg(2+). ADP contacts are provided by residues 345-346 (HT), Val-432, and Gly-442. Asp-443 lines the D-glucose pocket. Asp-443 is a Mg(2+) binding site. Asp-443 functions as the Proton acceptor in the catalytic mechanism.

This sequence belongs to the ADP-dependent glucokinase family. It depends on Mg(2+) as a cofactor.

The protein localises to the cytoplasm. It carries out the reaction D-glucose + ADP = D-glucose 6-phosphate + AMP + H(+). The enzyme catalyses D-glucosamine + ADP = D-glucosamine 6-phosphate + AMP + H(+). Its pathway is carbohydrate degradation; glycolysis. Its activity is regulated as follows. Inhibited by 8-bromoadenosine phosphate (8-Br-AMP). Functionally, catalyzes the ADP-dependent phosphorylation of D-glucose to D-glucose 6-phosphate and glucosamine to glucosamine 6-phosphate. The chain is ADP-dependent glucose/glucosamine kinase from Pyrococcus horikoshii (strain ATCC 700860 / DSM 12428 / JCM 9974 / NBRC 100139 / OT-3).